The primary structure comprises 51 residues: SPbeta prophage-derived uncharacterized protein YorQ (51 aa).

This is SPbeta prophage-derived uncharacterized protein YorQ (yorQ) from Bacillus subtilis (strain 168).